The following is a 367-amino-acid chain: Quinolinate synthase (367 aa).

Residues His-46 and Ser-63 each contribute to the iminosuccinate site. Cys-110 is a binding site for [4Fe-4S] cluster. Iminosuccinate-binding positions include 141–143 (YVN) and Ser-162. Cys-229 is a [4Fe-4S] cluster binding site. Iminosuccinate contacts are provided by residues 255 to 257 (HPE) and Thr-272. Cys-319 is a [4Fe-4S] cluster binding site.

This sequence belongs to the quinolinate synthase family. Type 3 subfamily. [4Fe-4S] cluster serves as cofactor.

It is found in the cytoplasm. The enzyme catalyses iminosuccinate + dihydroxyacetone phosphate = quinolinate + phosphate + 2 H2O + H(+). Its pathway is cofactor biosynthesis; NAD(+) biosynthesis; quinolinate from iminoaspartate: step 1/1. Its function is as follows. Catalyzes the condensation of iminoaspartate with dihydroxyacetone phosphate to form quinolinate. The protein is Quinolinate synthase of Bacillus velezensis (strain DSM 23117 / BGSC 10A6 / LMG 26770 / FZB42) (Bacillus amyloliquefaciens subsp. plantarum).